Consider the following 87-residue polypeptide: Cyclin-dependent kinases regulatory subunit 1 (87 aa).

This sequence belongs to the CKS family. Interacts with CDKA-1. Interacts with CDKB1-1, CDKB1-2 and CDKB2-1. Interacts with CYCD2-1 and At4g14310.

Functionally, associates with cyclin-dependent kinases (CDKs) and plays an essential role in the regulation of the cell cycle that affects plant growth rate. May inhibit both the G1/S and G2/M phases. The sequence is that of Cyclin-dependent kinases regulatory subunit 1 (CKS1) from Arabidopsis thaliana (Mouse-ear cress).